The primary structure comprises 574 residues: Membralin (574 aa).

The disordered stretch occupies residues 1 to 27 (MSEHAAAPGPGPNGGGGGGAAPVRGPR). Serine 2 carries the N-acetylserine modification. Residues 69 to 89 (FFVLLKALFVLFVLAYIHIVF) traverse the membrane as a helical segment. N-linked (GlcNAc...) asparagine glycosylation is present at asparagine 180. A run of 3 helical transmembrane segments spans residues 293–313 (TSYLAAFVIMVIFTLSVSMLL), 337–357 (IAFPAAPLLTVILALVGMEAI), and 417–437 (YSSLALVTSWLFIQHSMIYFF). 2 stretches are compositionally biased toward low complexity: residues 461–470 (LGPGTPTALP) and 491–501 (LGPSSSPAPTG). 2 disordered regions span residues 461 to 515 (LGPG…GASV) and 546 to 574 (RRPTAPSTPDSSRPDPGVPLEDAPAPAGS).

It belongs to the membralin family. In terms of assembly, interacts with ERLIN2. In terms of tissue distribution, detected in brain, spinal cord, lung, liver and kidney.

Its subcellular location is the endoplasmic reticulum membrane. Functionally, may have a role in the ERAD pathway required for clearance of misfolded proteins in the endoplasmic reticulum (ER). Promotes survival of motor neurons, probably by protecting against ER stress. In Mus musculus (Mouse), this protein is Membralin (Tmem259).